An 863-amino-acid polypeptide reads, in one-letter code: Protein ARG5,6, mitochondrial (863 aa).

The transit peptide at 1–65 directs the protein to the mitochondrion; that stretch reads MPSASLLVST…RYVSSTNGFS (65 aa). In terms of domain architecture, N-acetyltransferase spans 353–505; sequence KLVKRSSIGE…NFVKSCDTAS (153 aa). Ser359 carries the phosphoserine modification. Cys675 is a catalytic residue.

In the N-terminal section; belongs to the acetylglutamate kinase family. This sequence in the C-terminal section; belongs to the NAGSA dehydrogenase family. Post-translationally, the protein precursor is cleaved into the two biologically active enzymes, the kinase and the reductase.

The protein resides in the mitochondrion. It catalyses the reaction N-acetyl-L-glutamate 5-semialdehyde + phosphate + NADP(+) = N-acetyl-L-glutamyl 5-phosphate + NADPH + H(+). The catalysed reaction is N-acetyl-L-glutamate + ATP = N-acetyl-L-glutamyl 5-phosphate + ADP. It participates in amino-acid biosynthesis; L-arginine biosynthesis; N(2)-acetyl-L-ornithine from L-glutamate: step 2/4. Its pathway is amino-acid biosynthesis; L-arginine biosynthesis; N(2)-acetyl-L-ornithine from L-glutamate: step 3/4. Its activity is regulated as follows. The kinase activity is inhibited by arginine. This Saccharomyces cerevisiae (strain ATCC 204508 / S288c) (Baker's yeast) protein is Protein ARG5,6, mitochondrial (ARG5,6).